Reading from the N-terminus, the 218-residue chain is Ribosomal RNA small subunit methyltransferase G (218 aa).

S-adenosyl-L-methionine-binding positions include Gly-82, Leu-87, 137–138 (VE), and Arg-152.

This sequence belongs to the methyltransferase superfamily. RNA methyltransferase RsmG family.

The protein localises to the cytoplasm. It carries out the reaction guanosine(527) in 16S rRNA + S-adenosyl-L-methionine = N(7)-methylguanosine(527) in 16S rRNA + S-adenosyl-L-homocysteine. Functionally, specifically methylates the N7 position of guanine in position 527 of 16S rRNA. In Herminiimonas arsenicoxydans, this protein is Ribosomal RNA small subunit methyltransferase G.